We begin with the raw amino-acid sequence, 274 residues long: Large ribosomal subunit protein uL2 (274 aa).

Disordered stretches follow at residues 28-54 (APHA…TRHI) and 224-274 (VAMN…RRRK). The span at 263–274 (KRTDKMIVRRRK) shows a compositional bias: basic and acidic residues.

This sequence belongs to the universal ribosomal protein uL2 family. As to quaternary structure, part of the 50S ribosomal subunit. Forms a bridge to the 30S subunit in the 70S ribosome.

In terms of biological role, one of the primary rRNA binding proteins. Required for association of the 30S and 50S subunits to form the 70S ribosome, for tRNA binding and peptide bond formation. It has been suggested to have peptidyltransferase activity; this is somewhat controversial. Makes several contacts with the 16S rRNA in the 70S ribosome. The chain is Large ribosomal subunit protein uL2 from Pseudomonas savastanoi pv. phaseolicola (strain 1448A / Race 6) (Pseudomonas syringae pv. phaseolicola (strain 1448A / Race 6)).